We begin with the raw amino-acid sequence, 562 residues long: MSPWRCIAEQLVEYEEPVDAKAYFDKIICLWKEYPNAISNRINTSVPVEEESQVWNEVIANFESKYRFDPANSSELSIFKLIQRDYKRQSFSNNCYEVAFYEEELLVRFYPIVLDGQQHPHFESPYSIACKIPSNSSILLQFFKPVDTPDDHFEFLKTLAFKQLVTWLKSIDLSKTTRKTHSLLDKESYISTYRHIREDLGRPLVEGWTENSKPQKVIFEDCGIASYIQELITSGILPKPRKFVDIGCGNGLLVHLLNKIGIPGYGVDVRSRKVWKTTLSHVDLRESPVDPQIVVENRPHFDADVDLLIGNHSDELTPWIPVMAAKLNCNFFLIPCCPYNFFGKYLNNGSHLGPKRMTSQYESFFEWTVSVSERLGFDTKMDRLAIPSTKRLCIIGRVPEKGLCPSLEQTIEHMTQGQKFVARPREIRNNNCMHISVTDRERIAKKLFDFILNASDDVRDGWRCGGEVPLAQLAGQLTDDDKKLMKDQDGGLQTFLRNHHQIFHVFQATARLRDFRQPVVSRRQQTNPKKQEATNRPKQPCWMSLNHPDGCPLGPESCRYLH.

The tract at residues 520–546 (VSRRQQTNPKKQEATNRPKQPCWMSLN) is disordered. The C3H1-type zinc finger occupies 535-562 (NRPKQPCWMSLNHPDGCPLGPESCRYLH).

Belongs to the TRM44 family.

The protein resides in the cytoplasm. The catalysed reaction is uridine(44) in tRNA(Ser) + S-adenosyl-L-methionine = 2'-O-methyluridine(44) in tRNA(Ser) + S-adenosyl-L-homocysteine + H(+). In terms of biological role, probable adenosyl-L-methionine (AdoMet)-dependent tRNA (uracil-O(2)-)-methyltransferase. The sequence is that of Probable tRNA (uracil-O(2)-)-methyltransferase from Caenorhabditis briggsae.